The following is a 512-amino-acid chain: Maturase K (512 aa).

It belongs to the intron maturase 2 family. MatK subfamily.

It is found in the plastid. Its subcellular location is the chloroplast. Usually encoded in the trnK tRNA gene intron. Probably assists in splicing its own and other chloroplast group II introns. This chain is Maturase K, found in Daucus carota (Wild carrot).